The sequence spans 90 residues: Small ribosomal subunit protein uS19 (90 aa).

Belongs to the universal ribosomal protein uS19 family.

In terms of biological role, protein S19 forms a complex with S13 that binds strongly to the 16S ribosomal RNA. This is Small ribosomal subunit protein uS19 from Methylococcus capsulatus (strain ATCC 33009 / NCIMB 11132 / Bath).